The following is a 186-amino-acid chain: Biofilm operon icaADBC HTH-type negative transcriptional regulator IcaR (186 aa).

Positions 1–59 (MKDKIIDNAITLFSEKGYDGTTLDDIAKSVNIKKASLYYHFDSKKSIYEQSVKCCFDYL) constitute an HTH tetR-type domain. The H-T-H motif DNA-binding region spans 22–41 (TLDDIAKSVNIKKASLYYHF).

Homodimer.

Its function is as follows. Represses transcription of the icaADBC operon necessary for biofilm production. The chain is Biofilm operon icaADBC HTH-type negative transcriptional regulator IcaR (icaR) from Staphylococcus aureus (strain NCTC 8325 / PS 47).